Here is a 327-residue protein sequence, read N- to C-terminus: MVREKVKVSTRTLQWKCVESRKDSKRLYYGRFILSPLMKGQADTIGIAMRRALLGEIEGTCITRAKSENIPHDYSNIVGIQESVHEILMNLNEIVLRSNLYGTRNALICVQGPGYITAQDIILPPSVEIIDNTQHIATLTEPIDLCIELKIERNRGYSLKMSNNFEDRSYPIDAVFMPVQNANHSIHSYGNGNEKQEILFLEIWTNGSLTPKEALHEASRNLINLFIPFLHVEEETFYLENNQHQVTLPLFPFHNRLVNLRKKKKELAFQYIFIDQLELPPRIYNCLKKSNIHTLLDLLNNSQEDLIKIEHFHMEDVKKILDILEKK.

Residues Met1–Glu233 are alpha N-terminal domain (alpha-NTD). The alpha C-terminal domain (alpha-CTD) stretch occupies residues Leu267 to Lys327.

It belongs to the RNA polymerase alpha chain family. In plastids the minimal PEP RNA polymerase catalytic core is composed of four subunits: alpha, beta, beta', and beta''. When a (nuclear-encoded) sigma factor is associated with the core the holoenzyme is formed, which can initiate transcription.

It localises to the plastid. The protein resides in the chloroplast. It carries out the reaction RNA(n) + a ribonucleoside 5'-triphosphate = RNA(n+1) + diphosphate. DNA-dependent RNA polymerase catalyzes the transcription of DNA into RNA using the four ribonucleoside triphosphates as substrates. This chain is DNA-directed RNA polymerase subunit alpha, found in Lobularia maritima (Sweet alyssum).